Reading from the N-terminus, the 158-residue chain is Large ribosomal subunit protein uL15 (158 aa).

Over residues 1-13 (MKLNEIKDNEGST) the composition is skewed to basic and acidic residues. The segment at 1–45 (MKLNEIKDNEGSTHSRKRLGRGIGSGSGKTGGRGVKGQKSRSGVA) is disordered. A compositionally biased stretch (gly residues) spans 21–35 (RGIGSGSGKTGGRGV).

It belongs to the universal ribosomal protein uL15 family. Part of the 50S ribosomal subunit.

In terms of biological role, binds to the 23S rRNA. The protein is Large ribosomal subunit protein uL15 of Rhizobium johnstonii (strain DSM 114642 / LMG 32736 / 3841) (Rhizobium leguminosarum bv. viciae).